The sequence spans 314 residues: Mycothiol acetyltransferase (314 aa).

Glu39 contributes to the 1D-myo-inositol 2-(L-cysteinylamino)-2-deoxy-alpha-D-glucopyranoside binding site. An acetyl-CoA-binding site is contributed by 80 to 82 (LTA). Residues 159–313 (FVCRRFDPIS…PTGELGHEPP (155 aa)) enclose the N-acetyltransferase domain. Positions 186, 228, and 237 each coordinate 1D-myo-inositol 2-(L-cysteinylamino)-2-deoxy-alpha-D-glucopyranoside. Residues 241–243 (LGV) and 248–254 (QGQGVGR) contribute to the acetyl-CoA site. Tyr275 is a 1D-myo-inositol 2-(L-cysteinylamino)-2-deoxy-alpha-D-glucopyranoside binding site.

It belongs to the acetyltransferase family. MshD subfamily. As to quaternary structure, monomer.

The catalysed reaction is 1D-myo-inositol 2-(L-cysteinylamino)-2-deoxy-alpha-D-glucopyranoside + acetyl-CoA = mycothiol + CoA + H(+). Functionally, catalyzes the transfer of acetyl from acetyl-CoA to desacetylmycothiol (Cys-GlcN-Ins) to form mycothiol. The sequence is that of Mycothiol acetyltransferase from Jonesia denitrificans (strain ATCC 14870 / DSM 20603 / BCRC 15368 / CIP 55.134 / JCM 11481 / NBRC 15587 / NCTC 10816 / Prevot 55134) (Listeria denitrificans).